The primary structure comprises 89 residues: Small ribosomal subunit protein uS15 (89 aa).

The segment at 1–24 (MSLNAETKAGIVEKYRRDPSDTGS) is disordered. The segment covering 11–20 (IVEKYRRDPS) has biased composition (basic and acidic residues).

This sequence belongs to the universal ribosomal protein uS15 family. Part of the 30S ribosomal subunit. Forms a bridge to the 50S subunit in the 70S ribosome, contacting the 23S rRNA.

Functionally, one of the primary rRNA binding proteins, it binds directly to 16S rRNA where it helps nucleate assembly of the platform of the 30S subunit by binding and bridging several RNA helices of the 16S rRNA. Its function is as follows. Forms an intersubunit bridge (bridge B4) with the 23S rRNA of the 50S subunit in the ribosome. The protein is Small ribosomal subunit protein uS15 of Thioalkalivibrio sulfidiphilus (strain HL-EbGR7).